The primary structure comprises 124 residues: Large ribosomal subunit protein bL12 (124 aa).

This sequence belongs to the bacterial ribosomal protein bL12 family. Homodimer. Part of the ribosomal stalk of the 50S ribosomal subunit. Forms a multimeric L10(L12)X complex, where L10 forms an elongated spine to which 2 to 4 L12 dimers bind in a sequential fashion. Binds GTP-bound translation factors.

In terms of biological role, forms part of the ribosomal stalk which helps the ribosome interact with GTP-bound translation factors. Is thus essential for accurate translation. The polypeptide is Large ribosomal subunit protein bL12 (Brucella abortus (strain S19)).